The sequence spans 402 residues: Phosphoglycerate kinase (402 aa).

Substrate contacts are provided by residues 24–26 (DFN), Arg40, 63–66 (HFGR), Arg122, and Arg155. ATP-binding positions include Lys206, Gly297, Glu328, and 357–360 (GGDS).

It belongs to the phosphoglycerate kinase family. As to quaternary structure, monomer.

The protein localises to the cytoplasm. It carries out the reaction (2R)-3-phosphoglycerate + ATP = (2R)-3-phospho-glyceroyl phosphate + ADP. The protein operates within carbohydrate degradation; glycolysis; pyruvate from D-glyceraldehyde 3-phosphate: step 2/5. This Prochlorococcus marinus (strain SARG / CCMP1375 / SS120) protein is Phosphoglycerate kinase.